A 184-amino-acid chain; its full sequence is PXMP2/4 family protein 3 (184 aa).

An N-terminal signal peptide occupies residues 1–44 (MSNSKPLSLTDAVTTWYMKKLKSKPIQTKALTSATLSFISSVVA). 3 consecutive transmembrane segments (helical) span residues 58 to 78 (VVKF…WHII), 97 to 117 (IVDQ…VLAI), and 159 to 179 (LRVL…SILA).

Belongs to the peroxisomal membrane protein PXMP2/4 family.

Its subcellular location is the membrane. This Dictyostelium discoideum (Social amoeba) protein is PXMP2/4 family protein 3.